A 629-amino-acid chain; its full sequence is uncharacterized protein (629 aa).

Over residues 1-11 the composition is skewed to polar residues; that stretch reads MSDDQQNGKQN. Disordered regions lie at residues 1-24, 62-87, 197-464, and 493-560; these read MSDD…EQDD, SNNN…SNYN, SEES…SSLI, and PTPT…STPD. Residues 247–264 show a composition bias toward low complexity; sequence PSSSSSSSSLINSPTTSK. Polar residues predominate over residues 274–288; it reads PTINPKSLFGLSSTI. Over residues 294–430 the composition is skewed to basic and acidic residues; that stretch reads VKTEKEKEKE…DETLNKETPH (137 aa). 2 stretches are compositionally biased toward low complexity: residues 434–464 and 493–554; these read PHIT…SSLI and PTPT…NNNN.

This is an uncharacterized protein from Dictyostelium discoideum (Social amoeba).